The following is a 733-amino-acid chain: Putative cyclic nucleotide-gated ion channel 9 (733 aa).

Over 1 to 117 (MLDCGKKAVK…DKFLLLCNKL (117 aa)) the chain is Cytoplasmic. The helical transmembrane segment at 118 to 138 (FVTSCILAVSVDPLFLYLPFV) threads the bilayer. Topologically, residues 139–151 (KDNEKCIGIDRKL) are extracellular. A helical transmembrane segment spans residues 152 to 172 (AIIATTLRTVIDAFYLFHMAL). Residues 173–207 (RFRTAFVAPSSRVFGRGELVIDPAQIAKRYLQQYF) lie on the Cytoplasmic side of the membrane. A helical transmembrane segment spans residues 208 to 228 (IIDFLSVLPLPQIVVWRFLYI). Residues 229-239 (SKGASVLATKR) lie on the Extracellular side of the membrane. A helical transmembrane segment spans residues 240-260 (ALRSIILVQYIPRFIRLYPLS). The Cytoplasmic portion of the chain corresponds to 261-280 (SELKRTAGVFAETAWAGAAY). Residues 281-301 (YLLLYMLASHIVGAIWYLLAL) form a helical membrane-spanning segment. The Extracellular portion of the chain corresponds to 302–406 (ERYNGCWTKV…GQGLETSTYP (105 aa)). A helical membrane pass occupies residues 407–427 (GEVIFSIALAIAGLLLFALLI). At 428–733 (GNMQTYLQSL…EPDFSADDTS (306 aa)) the chain is on the cytoplasmic side. Residues 513–637 (LFEN…SRQV) and Glu-584 each bind a nucleoside 3',5'-cyclic phosphate. The tract at residues 629–644 (FRRLHSRQVQHTFRFY) is calmodulin-binding. The region spanning 649 to 678 (RTWAAIFIQAAWRRYVKKKKLEQLRKEEEE) is the IQ domain.

This sequence belongs to the cyclic nucleotide-gated cation channel (TC 1.A.1.5) family. Homotetramer or heterotetramer.

Its subcellular location is the cell membrane. In terms of biological role, putative cyclic nucleotide-gated ion channel. The protein is Putative cyclic nucleotide-gated ion channel 9 (CNGC9) of Arabidopsis thaliana (Mouse-ear cress).